Consider the following 278-residue polypeptide: Large ribosomal subunit protein uL2 (278 aa).

Positions 226 to 278 (MNPIDHPHGGGEGKTAAGRHPVSPWGTPSKGSRTRKNKRTSNMIVRSRYSKKG) are disordered.

The protein belongs to the universal ribosomal protein uL2 family. As to quaternary structure, part of the 50S ribosomal subunit. Forms a bridge to the 30S subunit in the 70S ribosome.

Functionally, one of the primary rRNA binding proteins. Required for association of the 30S and 50S subunits to form the 70S ribosome, for tRNA binding and peptide bond formation. It has been suggested to have peptidyltransferase activity; this is somewhat controversial. Makes several contacts with the 16S rRNA in the 70S ribosome. The protein is Large ribosomal subunit protein uL2 of Nitrosomonas europaea (strain ATCC 19718 / CIP 103999 / KCTC 2705 / NBRC 14298).